Reading from the N-terminus, the 430-residue chain is Asparagine--tRNA ligase (430 aa).

This sequence belongs to the class-II aminoacyl-tRNA synthetase family. In terms of assembly, homodimer.

The protein resides in the cytoplasm. The catalysed reaction is tRNA(Asn) + L-asparagine + ATP = L-asparaginyl-tRNA(Asn) + AMP + diphosphate + H(+). The polypeptide is Asparagine--tRNA ligase (Staphylococcus aureus (strain bovine RF122 / ET3-1)).